A 265-amino-acid polypeptide reads, in one-letter code: Undecaprenyl-diphosphatase (265 aa).

8 consecutive transmembrane segments (helical) span residues 1–21, 39–59, 84–104, 114–134, 144–164, 187–207, 218–238, and 244–264; these read MDIF…FLPI, QGVG…VLYF, ALAW…LALL, ASVI…ADWL, LNWK…VPGT, FSFL…LLEV, GFLI…HFFL, and VGMW…YAVL.

This sequence belongs to the UppP family.

Its subcellular location is the cell inner membrane. The enzyme catalyses di-trans,octa-cis-undecaprenyl diphosphate + H2O = di-trans,octa-cis-undecaprenyl phosphate + phosphate + H(+). Functionally, catalyzes the dephosphorylation of undecaprenyl diphosphate (UPP). Confers resistance to bacitracin. In Marinobacter nauticus (strain ATCC 700491 / DSM 11845 / VT8) (Marinobacter aquaeolei), this protein is Undecaprenyl-diphosphatase.